The sequence spans 83 residues: Putative cytochrome b5 B11H24.095 (83 aa).

The Cytochrome b5 heme-binding domain occupies 2–78; sequence SQTFTKSQVA…GTKLKVGTLA (77 aa). Heme-binding residues include His37 and His60.

Belongs to the cytochrome b5 family.

The protein is Putative cytochrome b5 B11H24.095 of Neurospora crassa (strain ATCC 24698 / 74-OR23-1A / CBS 708.71 / DSM 1257 / FGSC 987).